Here is a 559-residue protein sequence, read N- to C-terminus: Transcription activator of gluconeogenesis ERT1-2 (559 aa).

A DNA-binding region (zn(2)-C6 fungal-type) is located at residues 23–51 (CIHCQRTHLTCDNNRPCERCVARGFADTC). Disordered regions lie at residues 63–159 (DDKE…TPSQ), 231–263 (SNSL…TPSA), and 329–349 (AGQP…DSPS). 2 stretches are compositionally biased toward low complexity: residues 139–159 (QGPQ…TPSQ) and 231–244 (SNSL…QSPN). The span at 245-260 (THSPHNQDQPTPQAAT) shows a compositional bias: polar residues. One can recognise a PAS domain in the interval 440-512 (ALLEYQKFIS…ELFSRIAFGD (73 aa)).

Belongs to the ERT1/acuK family.

The protein resides in the nucleus. In terms of biological role, transcription factor which regulates nonfermentable carbon utilization. Activator of gluconeogenetic genes. The chain is Transcription activator of gluconeogenesis ERT1-2 (ERT1-2) from Yarrowia lipolytica (strain CLIB 122 / E 150) (Yeast).